The chain runs to 235 residues: Ornithine decarboxylase antizyme 3 (235 aa).

A phosphoserine mark is found at Ser-9 and Ser-12.

The protein belongs to the ODC antizyme family. Interacts with ODC1 and thereby sterically blocks ODC homodimerization. Interacts with AZIN2; this interaction disrupts the interaction between the antizyme and ODC1. Interacts with GGN. Testis specific.

It is found in the nucleus. The protein resides in the cytoplasm. Functionally, ornithine decarboxylase (ODC) antizyme protein that negatively regulates ODC activity and intracellular polyamine biosynthesis and uptake in response to increased intracellular polyamine levels. Binds to ODC monomers, inhibiting the assembly of the functional ODC homodimers. Does not target the ODC monomers for degradation, which allows a protein synthesis-independent restoration of ODC activity. Stabilizes AZIN2 by interfering with its ubiquitination. Involved in the translocation of AZNI2 from ER-Golgi intermediate compartment (ERGIC) to the cytosol. Probably plays a key role in spermatogenesis by regulating the intracellular concentration of polyamines in haploid germ cells. The protein is Ornithine decarboxylase antizyme 3 (OAZ3) of Homo sapiens (Human).